Reading from the N-terminus, the 297-residue chain is N-acetylneuraminate lyase (297 aa).

Ser47 and Thr48 together coordinate aceneuramate. The Proton donor role is filled by Tyr137. Lys165 (schiff-base intermediate with substrate) is an active-site residue. Thr167, Gly189, Asp191, Glu192, and Ser208 together coordinate aceneuramate.

The protein belongs to the DapA family. NanA subfamily. Homotetramer.

The protein localises to the cytoplasm. It carries out the reaction aceneuramate = aldehydo-N-acetyl-D-mannosamine + pyruvate. It functions in the pathway amino-sugar metabolism; N-acetylneuraminate degradation; D-fructose 6-phosphate from N-acetylneuraminate: step 1/5. Its function is as follows. Catalyzes the reversible aldol cleavage of N-acetylneuraminic acid (sialic acid; Neu5Ac) to form pyruvate and N-acetylmannosamine (ManNAc) via a Schiff base intermediate. The chain is N-acetylneuraminate lyase from Escherichia fergusonii (strain ATCC 35469 / DSM 13698 / CCUG 18766 / IAM 14443 / JCM 21226 / LMG 7866 / NBRC 102419 / NCTC 12128 / CDC 0568-73).